The sequence spans 357 residues: DNA replication and repair protein RecF (357 aa).

31–38 (GQNGAGKT) serves as a coordination point for ATP.

Belongs to the RecF family.

It is found in the cytoplasm. Its function is as follows. The RecF protein is involved in DNA metabolism; it is required for DNA replication and normal SOS inducibility. RecF binds preferentially to single-stranded, linear DNA. It also seems to bind ATP. This Coxiella burnetii (strain CbuG_Q212) (Coxiella burnetii (strain Q212)) protein is DNA replication and repair protein RecF.